The chain runs to 958 residues: MPVRRGHVAPQNTYLDTIIRKFEGQSRKFLIANAQMENCAIIYCNDGFCELFGYSRVEVMQQPCTCDFLTGPNTPSSAVSRLAQALLGAEECKVDILYYRKDASSFRCLVDVVPVKNEDGAVIMFILNFEDLAQLLAKCSSRSLSQRLLSQSFLGSEGSHGRPGGPGPGTGRGKYRTISQIPQFTLNFVEFNLEKHRSSSTTEIEIIAPHKVVERTQNVTEKVTQVLSLGADVLPEYKLQAPRIHRWTILHYSPFKAVWDWLILLLVIYTAVFTPYSAAFLLSDQDESRRGACSYTCSPLTVVDLIVDIMFVVDIVINFRTTYVNTNDEVVSHPRRIAVHYFKGWFLIDMVAAIPFDLLIFRTGSDETTTLIGLLKTARLLRLVRVARKLDRYSEYGAAVLFLLMCTFALIAHWLACIWYAIGNVERPYLEHKIGWLDSLGVQLGKRYNGSDPASGPSVQDKYVTALYFTFSSLTSVGFGNVSPNTNSEKVFSICVMLIGSLMYASIFGNVSAIIQRLYSGTARYHTQMLRVKEFIRFHQIPNPLRQRLEEYFQHAWSYTNGIDMNAVLKGFPECLQADICLHLHRALLQHCPAFSGAGKGCLRALAVKFKTTHAPPGDTLVHLGDVLSTLYFISRGSIEILRDDVVVAILGKNDIFGEPVSLHAQPGKSSADVRALTYCDLHKIQRADLLEVLDMYPAFAESFWSKLEVTFNLRDAAGGLHSSPRQAPGSQDHQGFFLSDNQSDAAPPLSISDASGLWPELLQEMPPRHSPQSPQEDPDCWPLKLGSRLEQLQAQMNRLESRVSSDLSRILQLLQKPMPQGHASYILEAPASNDLALVPIASETTSPGPRLPQGFLPPAQTPSYGDLDDCSPKHRNSSPRMPHLAVATDKTLAPSSEQEQPEGLWPPLASPLHPLEVQGLICGPCFSSLPEHLGSVPKQLDFQRHGSDPGFAGSWGH.

Residues 1–261 lie on the Cytoplasmic side of the membrane; the sequence is MPVRRGHVAP…YSPFKAVWDW (261 aa). Residues 41–70 enclose the PAS domain; it reads IIYCNDGFCELFGYSRVEVMQQPCTCDFLT. The PAC domain maps to 92 to 144; that stretch reads CKVDILYYRKDASSFRCLVDVVPVKNEDGAVIMFILNFEDLAQLLAKCSSRSL. The chain crosses the membrane as a helical span at residues 262–282; the sequence is LILLLVIYTAVFTPYSAAFLL. At 283–298 the chain is on the extracellular side; that stretch reads SDQDESRRGACSYTCS. A helical transmembrane segment spans residues 299 to 319; sequence PLTVVDLIVDIMFVVDIVINF. Residues 320–340 are Cytoplasmic-facing; that stretch reads RTTYVNTNDEVVSHPRRIAVH. A helical membrane pass occupies residues 341–361; that stretch reads YFKGWFLIDMVAAIPFDLLIF. The Extracellular segment spans residues 362 to 370; it reads RTGSDETTT. The helical; Voltage-sensor transmembrane segment at 371–391 threads the bilayer; that stretch reads LIGLLKTARLLRLVRVARKLD. The Cytoplasmic segment spans residues 392 to 398; it reads RYSEYGA. A helical membrane pass occupies residues 399–419; it reads AVLFLLMCTFALIAHWLACIW. Over 420–463 the chain is Extracellular; the sequence is YAIGNVERPYLEHKIGWLDSLGVQLGKRYNGSDPASGPSVQDKY. The N-linked (GlcNAc...) (complex) asparagine glycan is linked to Asn-449. Positions 464–484 form an intramembrane region, pore-forming; sequence VTALYFTFSSLTSVGFGNVSP. Positions 476 to 481 match the Selectivity filter motif; that stretch reads SVGFGN. Residues 485–490 are Extracellular-facing; sequence NTNSEK. Residues 491–511 form a helical membrane-spanning segment; the sequence is VFSICVMLIGSLMYASIFGNV. Residues 512-958 are Cytoplasmic-facing; it reads SAIIQRLYSG…DPGFAGSWGH (447 aa). The interval 594 to 694 is cNMP-binding domain; it reads AFSGAGKGCL…IQRADLLEVL (101 aa). 2 disordered regions span residues 720–751 and 845–910; these read GLHSSPRQAPGSQDHQGFFLSDNQSDAAPPLS and TTSP…PPLA. Residues 724 to 745 are compositionally biased toward polar residues; sequence SPRQAPGSQDHQGFFLSDNQSD.

This sequence belongs to the potassium channel family. H (Eag) (TC 1.A.1.20) subfamily. Kv11.2/KCNH6 sub-subfamily. In terms of assembly, the potassium channel is probably composed of a homo- or heterotetrameric complex of pore-forming alpha subunits that can associate only within their subfamily. In terms of tissue distribution, expressed in prolactin-secreting adenomas.

The protein resides in the cell membrane. The enzyme catalyses K(+)(in) = K(+)(out). Functionally, pore-forming (alpha) subunit of voltage-gated inwardly rectifying potassium channel. Characterized by unusual gating kinetics by producing relatively small outward currents during membrane depolarization and large inward currents during subsequent repolarization which reflect a rapid inactivation during depolarization and quick recovery from inactivation but slow deactivation (closing) during repolarization. Activates even more slowly than KCNH2. The protein is Voltage-gated inwardly rectifying potassium channel KCNH6 of Homo sapiens (Human).